Here is a 370-residue protein sequence, read N- to C-terminus: Histidinol-phosphate aminotransferase 3 (370 aa).

Position 229 is an N6-(pyridoxal phosphate)lysine (lysine 229).

Belongs to the class-II pyridoxal-phosphate-dependent aminotransferase family. Histidinol-phosphate aminotransferase subfamily. In terms of assembly, homodimer. Requires pyridoxal 5'-phosphate as cofactor.

It carries out the reaction L-histidinol phosphate + 2-oxoglutarate = 3-(imidazol-4-yl)-2-oxopropyl phosphate + L-glutamate. Its pathway is amino-acid biosynthesis; L-histidine biosynthesis; L-histidine from 5-phospho-alpha-D-ribose 1-diphosphate: step 7/9. This Rhizobium meliloti (strain 1021) (Ensifer meliloti) protein is Histidinol-phosphate aminotransferase 3 (hisC3).